The following is a 648-amino-acid chain: DNA gyrase subunit B (648 aa).

In terms of domain architecture, Toprim spans Arg-432–Pro-546. Positions 438, 511, and 513 each coordinate Mg(2+).

This sequence belongs to the type II topoisomerase GyrB family. In terms of assembly, heterotetramer, composed of two GyrA and two GyrB chains. In the heterotetramer, GyrA contains the active site tyrosine that forms a transient covalent intermediate with DNA, while GyrB binds cofactors and catalyzes ATP hydrolysis. Requires Mg(2+) as cofactor. It depends on Mn(2+) as a cofactor. Ca(2+) is required as a cofactor.

Its subcellular location is the cytoplasm. The enzyme catalyses ATP-dependent breakage, passage and rejoining of double-stranded DNA.. In terms of biological role, a type II topoisomerase that negatively supercoils closed circular double-stranded (ds) DNA in an ATP-dependent manner to modulate DNA topology and maintain chromosomes in an underwound state. Negative supercoiling favors strand separation, and DNA replication, transcription, recombination and repair, all of which involve strand separation. Also able to catalyze the interconversion of other topological isomers of dsDNA rings, including catenanes and knotted rings. Type II topoisomerases break and join 2 DNA strands simultaneously in an ATP-dependent manner. This chain is DNA gyrase subunit B, found in Metamycoplasma hominis (strain ATCC 23114 / DSM 25592 / NBRC 14850 / NCTC 10111 / PG21) (Mycoplasma hominis).